The sequence spans 25 residues: FPVDEEFQSPFGSRSRGYFLFRPRN.

The residue at position 25 (Asn-25) is an Asparagine amide.

This sequence belongs to the NmU family.

The protein resides in the secreted. In terms of biological role, stimulates uterine smooth muscle contraction and causes selective vasoconstriction. The chain is Neuromedin-U-25 (NMU) from Oryctolagus cuniculus (Rabbit).